We begin with the raw amino-acid sequence, 327 residues long: T-cell surface glycoprotein CD1a (327 aa).

Positions 1 to 16 (MLFLLLPLLAVLPGDG) are cleaved as a signal peptide. At 17–300 (NADGLKEPLS…VLYWEHHSSV (284 aa)) the chain is on the extracellular side. N-linked (GlcNAc...) asparagine glycosylation is found at Asn-37, Asn-60, and Asn-74. Residue 90-94 (RTIRS) participates in a D-galactosylceramide binding. 2 cysteine pairs are disulfide-bonded: Cys-119–Cys-183 and Cys-223–Cys-278. N-linked (GlcNAc...) asparagine glycosylation occurs at Asn-145. Residues Glu-171 and Thr-175 each coordinate a D-galactosylceramide. In terms of domain architecture, Ig-like spans 184–291 (PRFILGLLDA…HSSLEGQDIV (108 aa)). A helical transmembrane segment spans residues 301–321 (GFIILAVIVPLLLLIGLALWF). Residues 322 to 327 (RKRCFC) are Cytoplasmic-facing.

In terms of assembly, heterodimer with B2M (beta-2-microglobulin). Interacts with CD74. Expressed on cortical thymocytes, epidermal Langerhans cells, dendritic cells, on certain T-cell leukemias, and in various other tissues.

It is found in the cell membrane. It localises to the membrane raft. The protein localises to the endosome membrane. In terms of biological role, antigen-presenting protein that binds self and non-self lipid and glycolipid antigens and presents them to T-cell receptors on natural killer T-cells. This is T-cell surface glycoprotein CD1a (CD1A) from Homo sapiens (Human).